A 147-amino-acid chain; its full sequence is MKSLKKQRRIQVIILATVALVLATGLIGYAMRDGINFFRAPSDIIAEPPQPSETFRIGGLVEDGTLVRGQGETVRFSVTDGGASVPVVFTGVLPDLFAENQGMIGTGRYVNGVFEASEILAKHDETYMPKEVMDALKEQGVYQAPES.

The Cytoplasmic segment spans residues 1–9 (MKSLKKQRR). Residues 10 to 30 (IQVIILATVALVLATGLIGYA) form a helical; Signal-anchor for type II membrane protein membrane-spanning segment. Residues 31-147 (MRDGINFFRA…EQGVYQAPES (117 aa)) lie on the Periplasmic side of the membrane. Heme is bound by residues His-123 and Tyr-127.

Belongs to the CcmE/CycJ family.

It localises to the cell inner membrane. Heme chaperone required for the biogenesis of c-type cytochromes. Transiently binds heme delivered by CcmC and transfers the heme to apo-cytochromes in a process facilitated by CcmF and CcmH. The sequence is that of Cytochrome c-type biogenesis protein CcmE 1 from Ruegeria pomeroyi (strain ATCC 700808 / DSM 15171 / DSS-3) (Silicibacter pomeroyi).